Reading from the N-terminus, the 200-residue chain is Inducible T-cell costimulator (200 aa).

Residues Met-1–Gly-20 form the signal peptide. At Glu-21–Leu-144 the chain is on the extracellular side. An N-linked (GlcNAc...) asparagine glycan is attached at Asn-23. The Ig-like V-type domain occupies Met-30–Glu-133. Disulfide bonds link Cys-42–Cys-109 and Cys-63–Cys-83. N-linked (GlcNAc...) asparagine glycosylation is found at Asn-89 and Asn-123. A helical membrane pass occupies residues Pro-145–Phe-165. Over Ser-166 to Ser-200 the chain is Cytoplasmic.

Homodimer; disulfide-linked. Interacts with ICOSLG. Interacts with PIK3R1. Interacts with TBK1; this interaction is critical for the maturation of T follicular regulatory cells. In terms of processing, N-glycosylated. Expressed on activated T-cells and resting memory T-cells. High expression seen in the thymic medulla and in the germinal centers and T-cell zones of lymph nodes and Peyer patches. Expressed at low levels in the spleen.

The protein resides in the cell membrane. Stimulatory receptor expressed in activated or antigen-experienced T-cells that plays an important role in the immune response. Upon binding to its ligand ICOSL expressed on antigen presenting cells (APCs), delivers costimulatory signals that enhances all basic T-cell responses to a foreign antigen, namely proliferation, secretion of lymphokines including IL10, up-regulation of molecules that mediate cell-cell interaction, and effective help for antibody secretion by B-cells. Also acts as a costimulatory receptor critical for the differentiation of T follicular regulatory cells upon immune challenges such as viral infection. Mechanistically, potentiates TCR-induced calcium flux by augmenting PLCG1 activation and actin remodeling. In addition, activates PI3K signaling pathways independently of calcium flux. Essential both for efficient interaction between T and B-cells and for normal antibody responses to T-cell dependent antigens. Prevents the apoptosis of pre-activated T-cells. Plays a critical role in CD40-mediated class switching of immunoglobin isotypes. This Mus musculus (Mouse) protein is Inducible T-cell costimulator (Icos).